The sequence spans 645 residues: Lipase 1 (645 aa).

Residues 1–24 (MKRSFIFAPGMLALSISAISNAHA) form the signal peptide. Residue S34 is the Nucleophile of the active site. Catalysis depends on residues D327 and H330. The region spanning 383–645 (NEQGKLGVFG…SFSLGVNASF (263 aa)) is the Autotransporter domain.

Belongs to the 'GDSL' lipolytic enzyme family.

It localises to the secreted. The catalysed reaction is a triacylglycerol + H2O = a diacylglycerol + a fatty acid + H(+). The chain is Lipase 1 (lip-1) from Photorhabdus luminescens (Xenorhabdus luminescens).